The chain runs to 45 residues: uncharacterized protein (45 aa).

Residues 15 to 37 (EVVGTLMAVLITFALVAVVFNFI) form a helical membrane-spanning segment.

It is found in the membrane. This is an uncharacterized protein from Archaeoglobus fulgidus (strain ATCC 49558 / DSM 4304 / JCM 9628 / NBRC 100126 / VC-16).